The sequence spans 130 residues: Phosphoribosyl-AMP cyclohydrolase (130 aa).

Position 77 (Asp-77) interacts with Mg(2+). Cys-78 provides a ligand contact to Zn(2+). Mg(2+) contacts are provided by Asp-79 and Asp-81. Zn(2+)-binding residues include Cys-95 and Cys-102.

This sequence belongs to the PRA-CH family. Homodimer. Mg(2+) is required as a cofactor. The cofactor is Zn(2+).

The protein localises to the cytoplasm. It catalyses the reaction 1-(5-phospho-beta-D-ribosyl)-5'-AMP + H2O = 1-(5-phospho-beta-D-ribosyl)-5-[(5-phospho-beta-D-ribosylamino)methylideneamino]imidazole-4-carboxamide. The protein operates within amino-acid biosynthesis; L-histidine biosynthesis; L-histidine from 5-phospho-alpha-D-ribose 1-diphosphate: step 3/9. Its function is as follows. Catalyzes the hydrolysis of the adenine ring of phosphoribosyl-AMP. This is Phosphoribosyl-AMP cyclohydrolase from Pseudomonas putida (strain ATCC 700007 / DSM 6899 / JCM 31910 / BCRC 17059 / LMG 24140 / F1).